A 989-amino-acid chain; its full sequence is MESMKQFKNNNVDLISNNDPLDKNRALIEDLWESVLREECPDDQANRLIQLKELSYSNKVEEYSPKNFKTEIVDIVNSMDLAESISAARAFSLYFQLVNILEQRVEEDRYIQSFTNQNVKKSHDNLDPFAPALARQNAPVTFKELFFRLRRLNVPPGKLEELLQEMDIRLVFTAHPTEIVRHTIRHKQTRVANLLQKIQVEKFLTIEDIKSLKIQLKEEIRLWWRTDELHQFKPSVIDEVDYALHYFQQVLFDAMPQLRGRISSALTENYPDVQMPTESFCTFGSWVGSDRDGNPSVTPEITWRTACYQRQLMLERYIKATSNLRDQLSVSMQWSQVSSSLLESLETDRVKFPEIYEARATRYRSEPYRLKLSYILEKLRLTHERNNLLSEGGWKLSLERESDNKNLELVEKLHYKSVDEFTYDLELIKNSLNSTDLTCEAVNKLLTQVHIFGFSLASLDIRQESTRHSDAIQELTNYLELPKQYDQMSEKDRIQWLNEELNTKRPLIPSEVNWNKSTEETFSVFKMVKRLQEEFGSRICHSYVISMSHSASDLLEVLLLAKEMGLIDQGSQKSTLLVVPLFETVEDLQRAPDVMEQLFQLDFYKSLLPKVGESFKPLQELMLGYSDSNKDSGFLSSNWEIHRAQIALQNLSSRNNILLRLFHGRGGSVGRGGGPAYQAILAQPSGTLKGRIKITEQGEVLASKYSLPELALYNLETVTTAVIQNSLVNNRLDATPEWNDLMTRLAETSRIQYRKLVHENPNLLTFFQEVTPIEEISKLQISSRPARRKKGAKDLSSLRAIPWVFGWTQSRFLLPSWFGVGTALSVELKSDPEQIELLRVLHQRWPFFRMLISKVEMTLSKVDLEVAKYYVDTLGSKENSKSFEEIFDVISKEYNLTKSLVLEITGKNKLLESDRDLRSSVNLRNKTIIPLGFLQVSLLRRLRDQTRQPPISEFIEDRIESKRAYSRSELLRGALLTINGIAAGMRNTG.

Residues His-175 and Lys-630 contribute to the active site.

This sequence belongs to the PEPCase type 1 family. Mg(2+) is required as a cofactor.

The enzyme catalyses oxaloacetate + phosphate = phosphoenolpyruvate + hydrogencarbonate. Forms oxaloacetate, a four-carbon dicarboxylic acid source for the tricarboxylic acid cycle. The chain is Phosphoenolpyruvate carboxylase from Prochlorococcus marinus subsp. pastoris (strain CCMP1986 / NIES-2087 / MED4).